A 207-amino-acid chain; its full sequence is LexA repressor (207 aa).

The segment at residues Arg-28–Lys-48 is a DNA-binding region (H-T-H motif). Active-site for autocatalytic cleavage activity residues include Ser-124 and Lys-161.

It belongs to the peptidase S24 family. Homodimer.

It catalyses the reaction Hydrolysis of Ala-|-Gly bond in repressor LexA.. Its function is as follows. Represses a number of genes involved in the response to DNA damage (SOS response), including recA and lexA. In the presence of single-stranded DNA, RecA interacts with LexA causing an autocatalytic cleavage which disrupts the DNA-binding part of LexA, leading to derepression of the SOS regulon and eventually DNA repair. The protein is LexA repressor of Pseudoalteromonas atlantica (strain T6c / ATCC BAA-1087).